The following is a 251-amino-acid chain: Hydroxyacylglutathione hydrolase (251 aa).

The Zn(2+) site is built by His53, His55, Asp57, His58, His110, Asp127, and His165.

It belongs to the metallo-beta-lactamase superfamily. Glyoxalase II family. In terms of assembly, monomer. Zn(2+) serves as cofactor.

It catalyses the reaction an S-(2-hydroxyacyl)glutathione + H2O = a 2-hydroxy carboxylate + glutathione + H(+). The protein operates within secondary metabolite metabolism; methylglyoxal degradation; (R)-lactate from methylglyoxal: step 2/2. Functionally, thiolesterase that catalyzes the hydrolysis of S-D-lactoyl-glutathione to form glutathione and D-lactic acid. This chain is Hydroxyacylglutathione hydrolase, found in Escherichia coli O81 (strain ED1a).